Consider the following 439-residue polypeptide: Ribosomal protein uS12 methylthiotransferase RimO (439 aa).

One can recognise an MTTase N-terminal domain in the interval 3-113 (HKVGFVSLGC…VVNAVHQHLP (111 aa)). C12, C48, C77, C144, C148, and C151 together coordinate [4Fe-4S] cluster. In terms of domain architecture, Radical SAM core spans 130 to 367 (LTPRHYAYLK…MQVQAEISRN (238 aa)). One can recognise a TRAM domain in the interval 370 to 436 (KNKIGSTQTV…DYDLYGDLEY (67 aa)).

The protein belongs to the methylthiotransferase family. RimO subfamily. [4Fe-4S] cluster is required as a cofactor.

It is found in the cytoplasm. The enzyme catalyses L-aspartate(89)-[ribosomal protein uS12]-hydrogen + (sulfur carrier)-SH + AH2 + 2 S-adenosyl-L-methionine = 3-methylsulfanyl-L-aspartate(89)-[ribosomal protein uS12]-hydrogen + (sulfur carrier)-H + 5'-deoxyadenosine + L-methionine + A + S-adenosyl-L-homocysteine + 2 H(+). Catalyzes the methylthiolation of an aspartic acid residue of ribosomal protein uS12. The protein is Ribosomal protein uS12 methylthiotransferase RimO of Legionella pneumophila (strain Corby).